A 501-amino-acid polypeptide reads, in one-letter code: Flagellin (501 aa).

This sequence belongs to the bacterial flagellin family.

Its subcellular location is the secreted. It localises to the bacterial flagellum. Flagellin is the subunit protein which polymerizes to form the filaments of bacterial flagella. The sequence is that of Flagellin (flaA) from Aquifex pyrophilus.